We begin with the raw amino-acid sequence, 494 residues long: Alpha-amylase A (494 aa).

An N-terminal signal peptide occupies residues 1 to 18 (MFLAKSLVCLALLAVANA). Position 19 is a pyrrolidone carboxylic acid (Gln-19). A disulfide bridge links Cys-46 with Cys-102. Ca(2+) contacts are provided by Asn-116, Arg-165, and Asp-174. The cysteines at positions 153 and 167 are disulfide-linked. Position 202 (Arg-202) interacts with chloride. The Nucleophile role is filled by Asp-204. His-208 is a Ca(2+) binding site. Glu-241 acts as the Proton donor in catalysis. Chloride is bound by residues Asn-304 and Arg-343. Cystine bridges form between Cys-376/Cys-382 and Cys-448/Cys-460.

Belongs to the glycosyl hydrolase 13 family. As to quaternary structure, monomer. Requires Ca(2+) as cofactor. Chloride serves as cofactor.

It carries out the reaction Endohydrolysis of (1-&gt;4)-alpha-D-glucosidic linkages in polysaccharides containing three or more (1-&gt;4)-alpha-linked D-glucose units.. This Drosophila mauritiana (Fruit fly) protein is Alpha-amylase A (Amy-d).